The following is a 156-amino-acid chain: MNFNATLIGQTVAFIIFVWFCMKFVWPPLMNAIEERQKRIADGLADADRAVKDLELAQAKATDQLKEAKVTANEIIEQANKRKAQIVEEAKTEANAERAKIIAQGKAEIEAERNRVKEDLRKQVATLAIMGAEKILERSIDPAAHSDIVNKLVAEI.

Residues 7–27 (LIGQTVAFIIFVWFCMKFVWP) form a helical membrane-spanning segment.

This sequence belongs to the ATPase B chain family. F-type ATPases have 2 components, F(1) - the catalytic core - and F(0) - the membrane proton channel. F(1) has five subunits: alpha(3), beta(3), gamma(1), delta(1), epsilon(1). F(0) has three main subunits: a(1), b(2) and c(10-14). The alpha and beta chains form an alternating ring which encloses part of the gamma chain. F(1) is attached to F(0) by a central stalk formed by the gamma and epsilon chains, while a peripheral stalk is formed by the delta and b chains.

The protein localises to the cell inner membrane. Its function is as follows. F(1)F(0) ATP synthase produces ATP from ADP in the presence of a proton or sodium gradient. F-type ATPases consist of two structural domains, F(1) containing the extramembraneous catalytic core and F(0) containing the membrane proton channel, linked together by a central stalk and a peripheral stalk. During catalysis, ATP synthesis in the catalytic domain of F(1) is coupled via a rotary mechanism of the central stalk subunits to proton translocation. In terms of biological role, component of the F(0) channel, it forms part of the peripheral stalk, linking F(1) to F(0). The polypeptide is ATP synthase subunit b (Shewanella baltica (strain OS155 / ATCC BAA-1091)).